Here is a 60-residue protein sequence, read N- to C-terminus: Large ribosomal subunit protein bL32 (60 aa).

The segment at 1 to 60 (MAVQQNKKTPSKRGMHRSHDFLVAPQLSVEPTTGETHMRHHISPNGFYRGRKVLKTKNDE) is disordered. The segment covering 49-60 (RGRKVLKTKNDE) has biased composition (basic residues).

This sequence belongs to the bacterial ribosomal protein bL32 family.

The protein is Large ribosomal subunit protein bL32 of Janthinobacterium sp. (strain Marseille) (Minibacterium massiliensis).